A 458-amino-acid chain; its full sequence is Fumarate hydratase class II 2 (458 aa).

Residues 98–100, 123–126, 133–135, and T181 each bind substrate; these read SGT, NPND, and SSN. The active-site Proton donor/acceptor is the H182. S312 is an active-site residue. Residues S313 and 318–320 contribute to the substrate site; that span reads KVN.

It belongs to the class-II fumarase/aspartase family. Fumarase subfamily. In terms of assembly, homotetramer.

The protein resides in the cytoplasm. It catalyses the reaction (S)-malate = fumarate + H2O. The protein operates within carbohydrate metabolism; tricarboxylic acid cycle; (S)-malate from fumarate: step 1/1. Functionally, involved in the TCA cycle. Catalyzes the stereospecific interconversion of fumarate to L-malate. This chain is Fumarate hydratase class II 2, found in Pseudomonas aeruginosa (strain ATCC 15692 / DSM 22644 / CIP 104116 / JCM 14847 / LMG 12228 / 1C / PRS 101 / PAO1).